The following is a 258-amino-acid chain: MLAKRIIPCLDVRDGQVVKGVQFRHHEIIGDIVPLARRYADEGADELVFYDITASADGRVVDKSWVARVAAAIDIPFCVAGGIRSVKEAGLLLSYGADKISINSPALAEPTLITRLADRFGVQCVVVGIDTWHDAASDSDRVYQFTGDEARTRATAWQTADWVQEVQRRGAGEIVLNMMNQDGVRSGYDLRQLEQIRAVCRVPLIASGGAGAPEHFLAAFSQADVDGALAASVFHKQIIQIGELKRYLALNGVEIRLC.

Residues D11 and D130 contribute to the active site.

The protein belongs to the HisA/HisF family. As to quaternary structure, heterodimer of HisH and HisF.

Its subcellular location is the cytoplasm. It catalyses the reaction 5-[(5-phospho-1-deoxy-D-ribulos-1-ylimino)methylamino]-1-(5-phospho-beta-D-ribosyl)imidazole-4-carboxamide + L-glutamine = D-erythro-1-(imidazol-4-yl)glycerol 3-phosphate + 5-amino-1-(5-phospho-beta-D-ribosyl)imidazole-4-carboxamide + L-glutamate + H(+). Its pathway is amino-acid biosynthesis; L-histidine biosynthesis; L-histidine from 5-phospho-alpha-D-ribose 1-diphosphate: step 5/9. IGPS catalyzes the conversion of PRFAR and glutamine to IGP, AICAR and glutamate. The HisF subunit catalyzes the cyclization activity that produces IGP and AICAR from PRFAR using the ammonia provided by the HisH subunit. The protein is Imidazole glycerol phosphate synthase subunit HisF of Edwardsiella ictaluri (strain 93-146).